The chain runs to 222 residues: Deoxyribose-phosphate aldolase (222 aa).

The active-site Proton donor/acceptor is the Asp-93. Lys-156 functions as the Schiff-base intermediate with acetaldehyde in the catalytic mechanism. Lys-186 functions as the Proton donor/acceptor in the catalytic mechanism.

It belongs to the DeoC/FbaB aldolase family. DeoC type 1 subfamily.

Its subcellular location is the cytoplasm. The enzyme catalyses 2-deoxy-D-ribose 5-phosphate = D-glyceraldehyde 3-phosphate + acetaldehyde. Its pathway is carbohydrate degradation; 2-deoxy-D-ribose 1-phosphate degradation; D-glyceraldehyde 3-phosphate and acetaldehyde from 2-deoxy-alpha-D-ribose 1-phosphate: step 2/2. Its function is as follows. Catalyzes a reversible aldol reaction between acetaldehyde and D-glyceraldehyde 3-phosphate to generate 2-deoxy-D-ribose 5-phosphate. The chain is Deoxyribose-phosphate aldolase from Nocardia farcinica (strain IFM 10152).